A 197-amino-acid chain; its full sequence is Suppressor of RNA silencing p3 (197 aa).

This sequence belongs to the tenuiviruses p3 protein family. As to quaternary structure, homodimer.

The protein resides in the host cytoplasm. Acts as a suppressor of RNA-mediated gene silencing, also known as post-transcriptional gene silencing (PTGS), presumably through the binding of dsRNA. The sequence is that of Suppressor of RNA silencing p3 from Rottboellia (Sorghum).